The primary structure comprises 122 residues: Large ribosomal subunit protein uL18 (122 aa).

Over residues 1-21 the composition is skewed to basic residues; it reads MSKLSRKQQTQKRHRRLRRHI. Residues 1–25 form a disordered region; it reads MSKLSRKQQTQKRHRRLRRHITGTS.

This sequence belongs to the universal ribosomal protein uL18 family. In terms of assembly, part of the 50S ribosomal subunit; part of the 5S rRNA/L5/L18/L25 subcomplex. Contacts the 5S and 23S rRNAs.

This is one of the proteins that bind and probably mediate the attachment of the 5S RNA into the large ribosomal subunit, where it forms part of the central protuberance. The polypeptide is Large ribosomal subunit protein uL18 (Synechococcus sp. (strain CC9902)).